The chain runs to 409 residues: POU domain, class 4, transcription factor 2 (409 aa).

A disordered region spans residues 26 to 93 (YSALHSTSPG…SEAMRRACLP (68 aa)). A compositionally biased stretch (low complexity) spans 31-52 (STSPGSSAPIAPSASSPSSSSN). Residues 53 to 69 (AGGGGGGGGGGGGGGGR) are compositionally biased toward gly residues. The required for transcriptional activation stretch occupies residues 91 to 237 (CLPTPPSNIF…MHQAALSMAH (147 aa)). The POU-IV box motif lies at 110-119 (RAEALAAVDI). Over residues 153-166 (AASSSSVPISHPSA) the composition is skewed to low complexity. The interval 153–188 (AASSSSVPISHPSALAGTHHHHHHHHHHHHQPHQAL) is disordered. Residues 170-184 (THHHHHHHHHHHHQP) are compositionally biased toward basic residues. Positions 171–185 (HHHHHHHHHHHHQPH) match the Nuclear speckle targeting signal motif. The required for DNA-binding and transcriptional repression stretch occupies residues 238–409 (AHGLPSHMGC…QKRMKYSAGI (172 aa)). One can recognise a POU-specific domain in the interval 250-327 (DVDADPRDLE…ILQAWLEEAE (78 aa)). The segment at residues 345–404 (KKRKRTSIAAPEKRSLEAYFAIQPRPSSEKIAAIAEKLDLKKNVVRVWFCNQRQKQKRMK) is a DNA-binding region (homeobox).

Belongs to the POU transcription factor family. Class-4 subfamily. As to quaternary structure, interacts with POU4F1; this interaction inhibits both POU4F1 DNA-binding and transcriptional activities. Interacts (C-terminus) with ESR1 (via DNA-binding domain); this interaction increases the estrogen receptor ESR1 transcriptional activity in a DNA- and ligand 17-beta-estradiol-independent manner. Interacts (via C-terminus) with TP53 (via N-terminus). Interacts with DLX1 (via homeobox DNA-binding domain); this interaction suppresses DLX1-mediated transcriptional activity in postnatal retina enhancing retinal ganglion cell (RGC) differentiation. Interacts with DLX2 (via homeobox DNA-binding domain); this interaction enhances RGC differentiation. Interacts (via C-terminus) with ISL1 (via C-terminus). Interacts with ISL2. Interacts with LHX2. As to expression, expressed in the brain. Expressed in the ganglion cell layer of the retina.

The protein localises to the nucleus. Its subcellular location is the nucleus speckle. The protein resides in the cytoplasm. In terms of biological role, tissue-specific DNA-binding transcription factor involved in the development and differentiation of target cells. Functions either as activator or repressor modulating the rate of target gene transcription through RNA polymerase II enzyme in a promoter-dependent manner. Binds to the consensus octamer motif 5'-AT[A/T]A[T/A]T[A/T]A-3' of promoter of target genes. Plays a fundamental role in the gene regulatory network essential for retinal ganglion cell (RGC) differentiation. Binds to an octamer site to form a ternary complex with ISL1; cooperates positively with ISL1 and ISL2 to potentiate transcriptional activation of RGC target genes being involved in RGC fate commitment in the developing retina and RGC axon formation and pathfinding. Inhibits DLX1 and DLX2 transcriptional activities preventing DLX1- and DLX2-mediated ability to promote amacrine cell fate specification. In cooperation with TP53 potentiates transcriptional activation of BAX promoter activity increasing neuronal cell apoptosis. Negatively regulates BAX promoter activity in the absence of TP53. Acts as a transcriptional coactivator via its interaction with the transcription factor ESR1 by enhancing its effect on estrogen response element (ERE)-containing promoter. Antagonizes the transcriptional stimulatory activity of POU4F1 by preventing its binding to an octamer motif. Involved in TNFSF11-mediated terminal osteoclast differentiation. The chain is POU domain, class 4, transcription factor 2 from Homo sapiens (Human).